The chain runs to 242 residues: Uridylate kinase (242 aa).

Position 17–20 (Lys17–Gly20) interacts with ATP. Gly58 provides a ligand contact to UMP. ATP contacts are provided by Gly59 and Arg63. Residues Asp78 and Met139–Thr146 contribute to the UMP site. Positions 172 and 175 each coordinate ATP.

The protein belongs to the UMP kinase family. Homohexamer.

Its subcellular location is the cytoplasm. It carries out the reaction UMP + ATP = UDP + ADP. It participates in pyrimidine metabolism; CTP biosynthesis via de novo pathway; UDP from UMP (UMPK route): step 1/1. With respect to regulation, inhibited by UTP. In terms of biological role, catalyzes the reversible phosphorylation of UMP to UDP. The chain is Uridylate kinase from Rhodococcus jostii (strain RHA1).